Reading from the N-terminus, the 745-residue chain is Centromere protein I (745 aa).

Positions 1–27 (MATPRLTRNSQQQNRISQGSNSRQTTL) are enriched in polar residues. The segment at 1–58 (MATPRLTRNSQQQNRISQGSNSRQTTLLDWKVKDKAGNSKSVLEESSSLEDSNHADDQ) is disordered. The span at 39 to 50 (SKSVLEESSSLE) shows a compositional bias: low complexity.

The protein belongs to the CENP-I/CTF3 family. Component of the CENPA-CAD complex, composed of CENPI, CENPK, CENPL, CENPO, CENPP, CENPQ, CENPR and CENPS. The CENPA-CAD complex interacts with the CENPA-NAC complex, at least composed of CENPA, CENPC, CENPH, CENPM, CENPN, CENPT and CENPU. Interacts with SENP6. In terms of processing, sumoylated. Sumoylated form can be polyubiquitinated by RNF4, leading to its degradation. Desumoylation by SENP6 prevents its degradation. In terms of tissue distribution, highly expressed in testis, ovary and spleen. A much lower mRNA level is found in brain and lung, and no expression is detected in liver, kidney, heart, muscle, pituitary gland, prostate, epididymis and seminal vesicle.

The protein resides in the nucleus. Its subcellular location is the chromosome. The protein localises to the centromere. Component of the CENPA-CAD (nucleosome distal) complex, a complex recruited to centromeres which is involved in assembly of kinetochore proteins, mitotic progression and chromosome segregation. May be involved in incorporation of newly synthesized CENPA into centromeres via its interaction with the CENPA-NAC complex. Required for the localization of CENPF, MAD1L1 and MAD2 (MAD2L1 or MAD2L2) to kinetochores. Involved in the response of gonadal tissues to follicle-stimulating hormone. The polypeptide is Centromere protein I (Cenpi) (Rattus norvegicus (Rat)).